Consider the following 466-residue polypeptide: Argininosuccinate lyase (466 aa).

Residues Ser-27, Asn-114, and Thr-159 each contribute to the 2-(N(omega)-L-arginino)succinate site. Catalysis depends on His-160, which acts as the Proton acceptor. Residue Ser-281 is the Proton donor of the active site. Positions 289, 321, 326, and 329 each coordinate 2-(N(omega)-L-arginino)succinate.

This sequence belongs to the lyase 1 family. Argininosuccinate lyase subfamily. In terms of assembly, homotetramer. Eye lens.

The enzyme catalyses 2-(N(omega)-L-arginino)succinate = fumarate + L-arginine. Its pathway is amino-acid biosynthesis; L-arginine biosynthesis; L-arginine from L-ornithine and carbamoyl phosphate: step 3/3. Functionally, delta crystallin, the principal crystallin in embryonic lens, is found only in birds and reptiles. This protein may also function as an enzymatically active argininosuccinate lyase. The protein is Argininosuccinate lyase (ASL2) of Gallus gallus (Chicken).